The following is a 234-amino-acid chain: 1-(5-phosphoribosyl)-5-[(5-phosphoribosylamino)methylideneamino] imidazole-4-carboxamide isomerase (234 aa).

D9 functions as the Proton acceptor in the catalytic mechanism. The active-site Proton donor is D131.

This sequence belongs to the HisA/HisF family.

The protein resides in the cytoplasm. It carries out the reaction 1-(5-phospho-beta-D-ribosyl)-5-[(5-phospho-beta-D-ribosylamino)methylideneamino]imidazole-4-carboxamide = 5-[(5-phospho-1-deoxy-D-ribulos-1-ylimino)methylamino]-1-(5-phospho-beta-D-ribosyl)imidazole-4-carboxamide. It participates in amino-acid biosynthesis; L-histidine biosynthesis; L-histidine from 5-phospho-alpha-D-ribose 1-diphosphate: step 4/9. The chain is 1-(5-phosphoribosyl)-5-[(5-phosphoribosylamino)methylideneamino] imidazole-4-carboxamide isomerase from Staphylococcus carnosus (strain TM300).